The sequence spans 353 residues: Phenol hydroxylase P5 protein (353 aa).

The 91-residue stretch at 3 to 93 (YQVTIEPIGT…DMVIEADVDE (91 aa)) folds into the 2Fe-2S ferredoxin-type domain. The [2Fe-2S] cluster site is built by cysteine 37, cysteine 42, cysteine 45, and cysteine 77. The FAD-binding FR-type domain occupies 102–201 (VQDYQATVIE…SGPYGQFFVR (100 aa)).

In terms of assembly, the multicomponent enzyme phenol hydroxylase is formed by P0, P1, P2, P3, P4 and P5 polypeptides. Requires FAD as cofactor. The cofactor is [2Fe-2S] cluster.

It carries out the reaction phenol + NADPH + O2 + H(+) = catechol + NADP(+) + H2O. It participates in aromatic compound metabolism; phenol degradation. Functionally, catabolizes phenol, and some of its methylated derivatives. P5 is required for growth on phenol, and for in vitro phenol hydroxylase activity. In terms of biological role, probable electron transfer from NADPH, via FAD and the 2Fe-2S center, to the oxygenase activity site of the enzyme. In Acinetobacter pittii (strain PHEA-2), this protein is Phenol hydroxylase P5 protein (mphP).